The sequence spans 114 residues: Nucleoid-associated protein Clos_2855 (114 aa).

Belongs to the YbaB/EbfC family. Homodimer.

It localises to the cytoplasm. It is found in the nucleoid. Functionally, binds to DNA and alters its conformation. May be involved in regulation of gene expression, nucleoid organization and DNA protection. This Alkaliphilus oremlandii (strain OhILAs) (Clostridium oremlandii (strain OhILAs)) protein is Nucleoid-associated protein Clos_2855.